A 129-amino-acid chain; its full sequence is Flagellar assembly factor FliW 2 (129 aa).

The protein belongs to the FliW family. Interacts with translational regulator CsrA and flagellin(s).

It is found in the cytoplasm. In terms of biological role, acts as an anti-CsrA protein, binds CsrA and prevents it from repressing translation of its target genes, one of which is flagellin. Binds to flagellin and participates in the assembly of the flagellum. The polypeptide is Flagellar assembly factor FliW 2 (Helicobacter pylori (strain J99 / ATCC 700824) (Campylobacter pylori J99)).